We begin with the raw amino-acid sequence, 182 residues long: RFKKIRRLGALPGLTSKRPRSGSDLKNQLRSGKRSQYRIRLEEKQKLRFHYGLTERQLLRYVHIAGKAKGSTGQVLLQLLEMRLDNILFRLGMASTIPGARQLVNHRHILVNGRIVDIPSYRCKPRDIITTKDKQRSKALIQNYIASSPHEELPNHLTIDPFQYKGLVNQIIDSKWIGLKIN.

In terms of domain architecture, S4 RNA-binding spans 82 to 143 (MRLDNILFRL…KQRSKALIQN (62 aa)).

Belongs to the universal ribosomal protein uS4 family. In terms of assembly, part of the 30S ribosomal subunit. Contacts protein S5. The interaction surface between S4 and S5 is involved in control of translational fidelity.

It localises to the plastid. It is found in the chloroplast. One of the primary rRNA binding proteins, it binds directly to 16S rRNA where it nucleates assembly of the body of the 30S subunit. In terms of biological role, with S5 and S12 plays an important role in translational accuracy. This is Small ribosomal subunit protein uS4c (rps4) from Isophysis tasmanica.